The chain runs to 158 residues: Transcription elongation factor GreA (158 aa).

Residues 46 to 66 (AEYEAAKERQGFIEGRISELE) are a coiled coil.

It belongs to the GreA/GreB family.

Functionally, necessary for efficient RNA polymerase transcription elongation past template-encoded arresting sites. The arresting sites in DNA have the property of trapping a certain fraction of elongating RNA polymerases that pass through, resulting in locked ternary complexes. Cleavage of the nascent transcript by cleavage factors such as GreA or GreB allows the resumption of elongation from the new 3'terminus. GreA releases sequences of 2 to 3 nucleotides. This is Transcription elongation factor GreA from Neisseria meningitidis serogroup A / serotype 4A (strain DSM 15465 / Z2491).